The following is a 262-amino-acid chain: Hemin import ATP-binding protein HmuV (262 aa).

The ABC transporter domain maps to 5-242 (LEARKAGFAT…ELIGAVFDVE (238 aa)). An ATP-binding site is contributed by 37 to 44 (GPNGAGKS).

Belongs to the ABC transporter superfamily. Heme (hemin) importer (TC 3.A.1.14.5) family. As to quaternary structure, the complex is composed of two ATP-binding proteins (HmuV), two transmembrane proteins (HmuU) and a solute-binding protein (HmuT).

The protein resides in the cell inner membrane. Its function is as follows. Part of the ABC transporter complex HmuTUV involved in hemin import. Responsible for energy coupling to the transport system. The polypeptide is Hemin import ATP-binding protein HmuV (Rhodopseudomonas palustris (strain HaA2)).